We begin with the raw amino-acid sequence, 280 residues long: Probable endonuclease 4 (280 aa).

Residues histidine 77, histidine 117, glutamate 148, aspartate 180, histidine 183, histidine 215, aspartate 228, histidine 230, and glutamate 259 each coordinate Zn(2+).

The protein belongs to the AP endonuclease 2 family. It depends on Zn(2+) as a cofactor.

The enzyme catalyses Endonucleolytic cleavage to 5'-phosphooligonucleotide end-products.. Its function is as follows. Endonuclease IV plays a role in DNA repair. It cleaves phosphodiester bonds at apurinic or apyrimidinic (AP) sites, generating a 3'-hydroxyl group and a 5'-terminal sugar phosphate. The chain is Probable endonuclease 4 from Thermoplasma volcanium (strain ATCC 51530 / DSM 4299 / JCM 9571 / NBRC 15438 / GSS1).